An 894-amino-acid polypeptide reads, in one-letter code: B-cell lymphoma/leukemia 11B (894 aa).

Residues Ser97 and Ser110 each carry the phosphoserine modification. Thr120 is subject to Phosphothreonine. Ser129 is modified (phosphoserine). Lys137 participates in a covalent cross-link: Glycyl lysine isopeptide (Lys-Gly) (interchain with G-Cter in SUMO2). Residues 221 to 251 (YICTTCKQPFNSAWFLLQHAQNTHGFRIYLE) form a C2H2-type 1 zinc finger. Position 256 is a phosphoserine (Ser256). Thr260 carries the phosphothreonine modification. A Phosphoserine modification is found at Ser277. Arg293 is modified (omega-N-methylarginine). Arg322 is modified (asymmetric dimethylarginine). Ser358 is subject to Phosphoserine. Disordered regions lie at residues 370 to 428 (LAGN…KSKS) and 471 to 583 (KRHM…GGGA). Thr376 is modified (phosphothreonine). A phosphoserine mark is found at Ser381, Ser398, and Ser401. The span at 396-423 (QPSPKSPFLSTPPLPPMPPGGTPPPQPP) shows a compositional bias: pro residues. Thr406 and Thr417 each carry phosphothreonine. C2H2-type zinc fingers lie at residues 427–454 (KSCEFCGKTFKFQSNLIVHRRSHTGEKP) and 455–482 (YKCQLCDHACSQASKLKRHMKTHMHKAG). Residues 471 to 480 (KRHMKTHMHK) show a composition bias toward basic residues. Phosphoserine is present on residues Ser483, Ser488, Ser496, and Ser497. Over residues 511 to 529 (KAADGDFRHHESDPSLGHE) the composition is skewed to basic and acidic residues. Acidic residues predominate over residues 530 to 546 (PEEEDEEEEEEEEELLL). Residues 568–583 (NGGGGVPGVPGAGGGA) show a composition bias toward gly residues. Glycyl lysine isopeptide (Lys-Gly) (interchain with G-Cter in SUMO2) cross-links involve residues Lys591 and Lys617. The disordered stretch occupies residues 653–680 (GRGGGFAPGTEPFPGLFPRKPAPLPSPG). Residue Ser678 is modified to Phosphoserine. Glycyl lysine isopeptide (Lys-Gly) (interchain with G-Cter in SUMO2) cross-links involve residues Lys686 and Lys723. A compositionally biased stretch (polar residues) spans 737–752 (FATSSEHSSENGSLRF). The interval 737-794 (FATSSEHSSENGSLRFSTPPGDLLDGGLSGRSGTASGGSTPHLGGPGPGRPSSKEGRR) is disordered. A compositionally biased stretch (low complexity) spans 753–775 (STPPGDLLDGGLSGRSGTASGGS). The residue at position 754 (Thr754) is a Phosphothreonine. A phosphoserine mark is found at Ser765 and Ser772. C2H2-type zinc fingers lie at residues 796 to 823 (DTCEYCGKVFKNCSNLTVHRRSHTGERP), 824 to 853 (YKCELCNYACAQSSKLTRHMKTHGQIGKEV), and 854 to 884 (YRCDICQMPFSVYSTLEKHMKKWHGEHLLTN). At Lys851 the chain carries N6-acetyllysine. Residue Lys887 forms a Glycyl lysine isopeptide (Lys-Gly) (interchain with G-Cter in SUMO2) linkage.

Interacts with TFCOUP1, SIRT1, ARP1 and EAR2. Interacts with EP300; the interaction is detected in activated T-lymphocytes, but not under resting conditions. Post-translationally, sumoylated with SUMO1. In terms of tissue distribution, highly expressed in brain and in malignant T-cell lines derived from patients with adult T-cell leukemia/lymphoma.

It localises to the nucleus. Key regulator of both differentiation and survival of T-lymphocytes during thymocyte development in mammals. Essential in controlling the responsiveness of hematopoietic stem cells to chemotactic signals by modulating the expression of the receptors CCR7 and CCR9, which direct the movement of progenitor cells from the bone marrow to the thymus. Is a regulator of IL2 promoter and enhances IL2 expression in activated CD4(+) T-lymphocytes. Tumor-suppressor that represses transcription through direct, TFCOUP2-independent binding to a GC-rich response element. May also function in the P53-signaling pathway. This Homo sapiens (Human) protein is B-cell lymphoma/leukemia 11B (BCL11B).